The sequence spans 186 residues: Large ribosomal subunit protein uL22 (186 aa).

A disordered region spans residues 160–186 (AAENEPAKKKLSKKKLQRQKEKMMRNE). A compositionally biased stretch (basic and acidic residues) spans 177–186 (RQKEKMMRNE).

Belongs to the universal ribosomal protein uL22 family.

In Aedes aegypti (Yellowfever mosquito), this protein is Large ribosomal subunit protein uL22 (RpL17).